A 366-amino-acid chain; its full sequence is Autoinducer 2-binding periplasmic protein LuxP (366 aa).

An N-terminal signal peptide occupies residues 1 to 13; the sequence is MKKILLTCLLASA.

Belongs to the bacterial solute-binding protein 2 family.

The protein localises to the periplasm. Binds to an autoinducer molecule. This complex then interacts with the LuxQ sensor protein. The chain is Autoinducer 2-binding periplasmic protein LuxP (luxP) from Vibrio vulnificus (strain CMCP6).